Here is a 332-residue protein sequence, read N- to C-terminus: Ribosomal RNA small subunit methyltransferase H (332 aa).

S-adenosyl-L-methionine is bound by residues 36–38, Asp61, Phe88, Asp114, and Gln121; that span reads GGH.

This sequence belongs to the methyltransferase superfamily. RsmH family.

The protein resides in the cytoplasm. It carries out the reaction cytidine(1402) in 16S rRNA + S-adenosyl-L-methionine = N(4)-methylcytidine(1402) in 16S rRNA + S-adenosyl-L-homocysteine + H(+). Functionally, specifically methylates the N4 position of cytidine in position 1402 (C1402) of 16S rRNA. In Pelodictyon phaeoclathratiforme (strain DSM 5477 / BU-1), this protein is Ribosomal RNA small subunit methyltransferase H.